Reading from the N-terminus, the 345-residue chain is NADH-ubiquinone oxidoreductase chain 2 (345 aa).

10 helical membrane-spanning segments follow: residues 3 to 23 (PYIL…TFAS), 25 to 45 (NWLL…PLMA), 59 to 79 (YFIT…INAW), 95 to 115 (ALMT…FWLP), 148 to 168 (LMPE…GWGG), 177 to 196 (IMAY…MHFM), 201 to 223 (IINL…TLNS), 236 to 256 (FPAL…LPPL), 273 to 293 (NLAL…YFYL), and 322 to 342 (FILP…PSII).

Belongs to the complex I subunit 2 family.

It is found in the mitochondrion inner membrane. The catalysed reaction is a ubiquinone + NADH + 5 H(+)(in) = a ubiquinol + NAD(+) + 4 H(+)(out). In terms of biological role, core subunit of the mitochondrial membrane respiratory chain NADH dehydrogenase (Complex I) that is believed to belong to the minimal assembly required for catalysis. Complex I functions in the transfer of electrons from NADH to the respiratory chain. The immediate electron acceptor for the enzyme is believed to be ubiquinone. This Polypterus ornatipinnis (Ornate bichir) protein is NADH-ubiquinone oxidoreductase chain 2 (MT-ND2).